Reading from the N-terminus, the 801-residue chain is Putative mRNA-capping enzyme P5 (801 aa).

The protein belongs to the phytoreovirus protein P5 family.

Its subcellular location is the virion. The protein resides in the host cytoplasm. The catalysed reaction is a 5'-end diphospho-ribonucleoside in mRNA + GTP + H(+) = a 5'-end (5'-triphosphoguanosine)-ribonucleoside in mRNA + diphosphate. It participates in mRNA processing; mRNA capping. Enzyme involved in mRNA capping (Potential). Binds to GTP and might have guanylyltransferase activity. Together with the RNA-directed RNA polymerase P1 and protein P7, forms an transcriptional complex positioned near the channels situated at each of the five-fold vertices of the core. The protein is Putative mRNA-capping enzyme P5 of Alopecurus aequalis (Barnyard grass).